The sequence spans 268 residues: MERYESLFTQLKERKEGAFIPFVTLGDPGIEQSLKIIDTLIEAGADALELGIPFSDPLADGPTIQNATLRAFAAGVTPAQCFEVLALIRQKHPTIPIGLLMYANLVFNKGIDEFYAECEKVGVDSVLVADVPVEESAPFRQAALRHNVAPIFICPPNADDDLLRQIASYGRGYTYLLSRAGVTGAENRAALPLNHLVAKLKEYNAAPPLQGFGISAPDQVKAAIDAGAAGAISGSAIVKIIEQHINEPEKMLAALKAFVQPMKAATRS.

Active-site proton acceptor residues include Glu-49 and Asp-60.

The protein belongs to the TrpA family. As to quaternary structure, tetramer of two alpha and two beta chains.

The enzyme catalyses (1S,2R)-1-C-(indol-3-yl)glycerol 3-phosphate + L-serine = D-glyceraldehyde 3-phosphate + L-tryptophan + H2O. It functions in the pathway amino-acid biosynthesis; L-tryptophan biosynthesis; L-tryptophan from chorismate: step 5/5. Its function is as follows. The alpha subunit is responsible for the aldol cleavage of indoleglycerol phosphate to indole and glyceraldehyde 3-phosphate. The chain is Tryptophan synthase alpha chain from Escherichia coli O81 (strain ED1a).